The following is a 441-amino-acid chain: Alpha-monoglucosyldiacylglycerol synthase (441 aa).

The protein belongs to the glycosyltransferase group 1 family. Glycosyltransferase 4 subfamily. Requires Mg(2+) as cofactor.

It localises to the cell membrane. It catalyses the reaction a 1,2-diacyl-sn-glycerol + UDP-alpha-D-glucose = a 1,2-diacyl-3-O-(alpha-D-glucopyranosyl)-sn-glycerol + UDP + H(+). Its activity is regulated as follows. Activated by the negatively charged lipid phosphatidylglycerol (PG). Its function is as follows. Glucosyltransferase involved in the biosynthesis of the non-bilayer-prone membrane lipid alpha-monoglucosyldiacylglycerol. This is a major component for maintaining a certain anionic lipid surface charge density, for balancing the bilayer to non-bilayer phase equilibria and for keeping a constant lipid bilayer spontaneous curvature (curvature packing stress). Catalyzes the transfer of a glucosyl residue from UDP-Glc to diacylglycerol (DAG) acceptor to form the corresponding alpha-glucosyl-DAG (1,2-diacyl-3-O-(alpha-D-glucopyranosyl)-sn-glycerol). It can only use UDP-Glc as sugar donor. The chain is Alpha-monoglucosyldiacylglycerol synthase from Streptococcus pneumoniae (strain ATCC BAA-255 / R6).